Reading from the N-terminus, the 307-residue chain is Ribosomal RNA small subunit methyltransferase H (307 aa).

S-adenosyl-L-methionine-binding positions include glycine 32–histidine 34, aspartate 52, phenylalanine 78, aspartate 100, and glutamine 107.

Belongs to the methyltransferase superfamily. RsmH family.

The protein localises to the cytoplasm. It carries out the reaction cytidine(1402) in 16S rRNA + S-adenosyl-L-methionine = N(4)-methylcytidine(1402) in 16S rRNA + S-adenosyl-L-homocysteine + H(+). In terms of biological role, specifically methylates the N4 position of cytidine in position 1402 (C1402) of 16S rRNA. This chain is Ribosomal RNA small subunit methyltransferase H, found in Coxiella burnetii (strain Dugway 5J108-111).